The chain runs to 400 residues: Queuine tRNA-ribosyltransferase catalytic subunit (400 aa).

The active-site Proton acceptor is the D89. Substrate is bound by residues 89 to 93 (DSGGF), D143, Q185, and G212. Residues 243–249 (GVGFPVD) form an RNA binding region. The active-site Nucleophile is the D262. Positions 267-271 (TRTAR) are RNA binding; important for wobble base 34 recognition. Residues C301, C303, C306, and H331 each coordinate Zn(2+).

The protein belongs to the queuine tRNA-ribosyltransferase family. In terms of assembly, heterodimer of a catalytic subunit and an accessory subunit. Requires Zn(2+) as cofactor.

The protein resides in the cytoplasm. The catalysed reaction is guanosine(34) in tRNA + queuine = queuosine(34) in tRNA + guanine. Functionally, catalytic subunit of the queuine tRNA-ribosyltransferase (TGT) that catalyzes the base-exchange of a guanine (G) residue with queuine (Q) at position 34 (anticodon wobble position) in tRNAs with GU(N) anticodons (tRNA-Asp, -Asn, -His and -Tyr), resulting in the hypermodified nucleoside queuosine (7-(((4,5-cis-dihydroxy-2-cyclopenten-1-yl)amino)methyl)-7-deazaguanosine). Catalysis occurs through a double-displacement mechanism. The nucleophile active site attacks the C1' of nucleotide 34 to detach the guanine base from the RNA, forming a covalent enzyme-RNA intermediate. The proton acceptor active site deprotonates the incoming queuine, allowing a nucleophilic attack on the C1' of the ribose to form the product. In Caenorhabditis briggsae, this protein is Queuine tRNA-ribosyltransferase catalytic subunit.